A 48-amino-acid polypeptide reads, in one-letter code: M-oxotoxin-Ot1a (48 aa).

In terms of tissue distribution, expressed by the venom gland.

The protein localises to the secreted. It localises to the target cell membrane. Its function is as follows. Disrupts cell membranes, particularly those rich in phosphocholine, through formation of pores. Has antimicrobial activity against Gram-negative bacterium E.coli, Gram-positive bacteria B.subtilis and S.aureus, and hemolytic activity against sheep, pig and guinea pig erythrocytes. Has insecticidal activity against S.frugiperda ovarian cells by opening non-selective ion channels. Enhances the insecticidal activity of spider venom neurotoxic peptides. This is M-oxotoxin-Ot1a from Oxyopes takobius (Lynx spider).